Consider the following 380-residue polypeptide: MPRSQDPVMRTRRFLEHLTRKYYERARVKLPGDFSLREFALQTWTGKSYLRHLSFASTEAVHRLLVEKAPRHFYYSSARYDQPGADDMDAKGWRSADLTFDIDADHLPECSGSIVEVDGGIEGKTSFIEEALCMRAAALRAQILYDILVYELGFDKSRIAIEFSGHRGFHVTVYLDDFDDYAKAGSDVRREIVNYVKALGLRADVLEPWTMLQVRRGKPIPIPPNVQLAGARGRVARIIRRLALRDGAIDIVKAVEGPSTTYSEELREYEDKARQLIGVEIDEQVSVDVKRLIRVPYSINGKTGLLVKPVTVDELDEFVVDETLSPFAREPPVRIRVVTSLPSSVTILGNRLKLREGDSPRLPAPVAVYLMAKGVAVLAQ.

Residues D101, D103, and D282 contribute to the active site.

Belongs to the eukaryotic-type primase small subunit family. As to quaternary structure, heterodimer of a small subunit (PriS) and a large subunit (PriL). Mg(2+) serves as cofactor. Mn(2+) is required as a cofactor.

Functionally, catalytic subunit of DNA primase, an RNA polymerase that catalyzes the synthesis of short RNA molecules used as primers for DNA polymerase during DNA replication. The small subunit contains the primase catalytic core and has DNA synthesis activity on its own. Binding to the large subunit stabilizes and modulates the activity, increasing the rate of DNA synthesis while decreasing the length of the DNA fragments, and conferring RNA synthesis capability. The DNA polymerase activity may enable DNA primase to also catalyze primer extension after primer synthesis. May also play a role in DNA repair. The chain is DNA primase small subunit PriS from Hyperthermus butylicus (strain DSM 5456 / JCM 9403 / PLM1-5).